Here is a 268-residue protein sequence, read N- to C-terminus: Small ribosomal subunit protein uS3 (268 aa).

Residues 38–106 (IRKLLATGME…QVQLNILEVK (69 aa)) form the KH type-2 domain. Residues 217 to 268 (NTAAPAGDRPRRERPSRPRRSGATGTTATSTEAGRAATATADAPATEQNQEG) are disordered. Residues 237 to 268 (SGATGTTATSTEAGRAATATADAPATEQNQEG) are compositionally biased toward low complexity.

The protein belongs to the universal ribosomal protein uS3 family. Part of the 30S ribosomal subunit. Forms a tight complex with proteins S10 and S14.

Functionally, binds the lower part of the 30S subunit head. Binds mRNA in the 70S ribosome, positioning it for translation. This is Small ribosomal subunit protein uS3 from Rhodococcus erythropolis (strain PR4 / NBRC 100887).